The chain runs to 420 residues: UDP-N-acetyl-D-mannosamine dehydrogenase (420 aa).

NAD(+) is bound by residues tyrosine 13, isoleucine 14, aspartate 33, threonine 85, and threonine 126. Residues arginine 160, valine 161, lysine 212, asparagine 216, arginine 219, histidine 250, arginine 252, and glycine 263 each contribute to the UDP-N-acetyl-alpha-D-mannosaminouronate site. The active-site Proton donor/acceptor is the lysine 212. The active-site Nucleophile is cysteine 266. UDP-N-acetyl-alpha-D-mannosaminouronate contacts are provided by phenylalanine 330 and lysine 331. Arginine 338 is an NAD(+) binding site. Lysine 416 provides a ligand contact to UDP-N-acetyl-alpha-D-mannosaminouronate.

Belongs to the UDP-glucose/GDP-mannose dehydrogenase family. WecC subfamily. In terms of assembly, homodimer.

The enzyme catalyses UDP-N-acetyl-alpha-D-mannosamine + 2 NAD(+) + H2O = UDP-N-acetyl-alpha-D-mannosaminouronate + 2 NADH + 3 H(+). It participates in bacterial outer membrane biogenesis; enterobacterial common antigen biosynthesis. Functionally, catalyzes the four-electron oxidation of UDP-N-acetyl-D-mannosamine (UDP-ManNAc), reducing NAD(+) and releasing UDP-N-acetylmannosaminuronic acid (UDP-ManNAcA). The sequence is that of UDP-N-acetyl-D-mannosamine dehydrogenase from Salmonella typhimurium (strain LT2 / SGSC1412 / ATCC 700720).